The chain runs to 284 residues: MSDTNTEKPELVSLNKLSEMRTNIGMVKRYWNPKMGFFIEPERKHNNDLLKLDLQYQALKTAYNFIKDVVKNHGQILFVGTKNDYVKKLVIDIAKRVNVAYITQRWLGGTLTNFKTLSISINKLNKLVEQQKQNANDLTKKENLLLSREIERLEKFFGGVKNLKRLPNLIVIDDPVYEKNAVLEANSLKIPVVALCNTNTNPELVDFIIPANNHQPQSTCLLMNLLADAIAEAKGFETLYAYKPDEQIQIEIPPKQERQVINRSNTRNITNQRLNINRQQQETL.

It belongs to the universal ribosomal protein uS2 family.

This Mycoplasma genitalium (strain ATCC 33530 / DSM 19775 / NCTC 10195 / G37) (Mycoplasmoides genitalium) protein is Small ribosomal subunit protein uS2 (rpsB).